A 139-amino-acid polypeptide reads, in one-letter code: 3-hydroxyacyl-[acyl-carrier-protein] dehydratase FabZ (139 aa).

His-47 is a catalytic residue.

Belongs to the thioester dehydratase family. FabZ subfamily.

The protein resides in the cytoplasm. The enzyme catalyses a (3R)-hydroxyacyl-[ACP] = a (2E)-enoyl-[ACP] + H2O. Involved in unsaturated fatty acids biosynthesis. Catalyzes the dehydration of short chain beta-hydroxyacyl-ACPs and long chain saturated and unsaturated beta-hydroxyacyl-ACPs. This Oenococcus oeni (strain ATCC BAA-331 / PSU-1) protein is 3-hydroxyacyl-[acyl-carrier-protein] dehydratase FabZ.